Consider the following 316-residue polypeptide: 4-hydroxy-3-methylbut-2-enyl diphosphate reductase (316 aa).

A [4Fe-4S] cluster-binding site is contributed by C12. The (2E)-4-hydroxy-3-methylbut-2-enyl diphosphate site is built by H41 and H74. H41 and H74 together coordinate dimethylallyl diphosphate. H41 and H74 together coordinate isopentenyl diphosphate. [4Fe-4S] cluster is bound at residue C96. Position 124 (H124) interacts with (2E)-4-hydroxy-3-methylbut-2-enyl diphosphate. A dimethylallyl diphosphate-binding site is contributed by H124. H124 is an isopentenyl diphosphate binding site. Residue E126 is the Proton donor of the active site. Position 165 (T165) interacts with (2E)-4-hydroxy-3-methylbut-2-enyl diphosphate. C195 contributes to the [4Fe-4S] cluster binding site. (2E)-4-hydroxy-3-methylbut-2-enyl diphosphate contacts are provided by S223, S224, N225, and S267. Dimethylallyl diphosphate is bound by residues S223, S224, N225, and S267. Isopentenyl diphosphate contacts are provided by S223, S224, N225, and S267.

Belongs to the IspH family. [4Fe-4S] cluster is required as a cofactor.

It catalyses the reaction isopentenyl diphosphate + 2 oxidized [2Fe-2S]-[ferredoxin] + H2O = (2E)-4-hydroxy-3-methylbut-2-enyl diphosphate + 2 reduced [2Fe-2S]-[ferredoxin] + 2 H(+). The enzyme catalyses dimethylallyl diphosphate + 2 oxidized [2Fe-2S]-[ferredoxin] + H2O = (2E)-4-hydroxy-3-methylbut-2-enyl diphosphate + 2 reduced [2Fe-2S]-[ferredoxin] + 2 H(+). It participates in isoprenoid biosynthesis; dimethylallyl diphosphate biosynthesis; dimethylallyl diphosphate from (2E)-4-hydroxy-3-methylbutenyl diphosphate: step 1/1. It functions in the pathway isoprenoid biosynthesis; isopentenyl diphosphate biosynthesis via DXP pathway; isopentenyl diphosphate from 1-deoxy-D-xylulose 5-phosphate: step 6/6. Catalyzes the conversion of 1-hydroxy-2-methyl-2-(E)-butenyl 4-diphosphate (HMBPP) into a mixture of isopentenyl diphosphate (IPP) and dimethylallyl diphosphate (DMAPP). Acts in the terminal step of the DOXP/MEP pathway for isoprenoid precursor biosynthesis. This is 4-hydroxy-3-methylbut-2-enyl diphosphate reductase from Acidithiobacillus ferrooxidans (strain ATCC 53993 / BNL-5-31) (Leptospirillum ferrooxidans (ATCC 53993)).